The chain runs to 254 residues: Trypsin 3A1 (254 aa).

An N-terminal signal peptide occupies residues Met1–Ala20. The propeptide at Ala21–Arg27 is activation peptide. Positions Ile28–Glu253 constitute a Peptidase S1 domain. Cys53 and Cys69 are disulfide-bonded. Residues His68 and Asp113 each act as charge relay system in the active site. 2 disulfide bridges follow: Cys178-Cys194 and Cys205-Cys229. Ser209 (charge relay system) is an active-site residue.

Belongs to the peptidase S1 family. In terms of tissue distribution, midgut.

It localises to the secreted. Its subcellular location is the extracellular space. It carries out the reaction Preferential cleavage: Arg-|-Xaa, Lys-|-Xaa.. Functionally, major function may be to aid in digestion of the blood meal. This is Trypsin 3A1 from Aedes aegypti (Yellowfever mosquito).